Here is a 428-residue protein sequence, read N- to C-terminus: MTAVKTPIQVRYEVRNLELAAEGRQRIEWAAREMPVLKQLRQRFSQERPLAGIRISACCHVTTETANLAVALKAAGADALLIASNPLSTQDDVAASLVVDHGIPVFALKGEDTATYLRHVRVALDHRPQIIIDDGSDVVATMIKDRPDLIAGVIGTTEETTTGIVRLKAMLAAGVLTFPAMAVNDAETKHFFDNRYGTGQSTLDGIIRATNILLAGKTIVVAGYGWCGKGVALRARGMGANVVVTEINPVRAIEAAMDGLQVMPMAEAACLGDLFITVTGNKHVIRREHFAMMKDGAIVCNSGHFDIEIDLVALGELSSERRMVRPFTEEYTLEGGKSVIVLGEGRLINLAAAEGHPASVMDMSFANQALAVEYLIKNQGKLSPGIYNIPEELDRQIAALKLAAMGIAIDTLTPDQLHYISSWDEGTE.

The substrate site is built by T62, D134, and E159. 160–162 (TTT) contributes to the NAD(+) binding site. Residues K189 and D193 each contribute to the substrate site. Residues N194, 223-228 (GYGWCG), E246, N281, 302-304 (SGH), and N349 each bind NAD(+).

This sequence belongs to the adenosylhomocysteinase family. Requires NAD(+) as cofactor.

The protein localises to the cytoplasm. The catalysed reaction is S-adenosyl-L-homocysteine + H2O = L-homocysteine + adenosine. The protein operates within amino-acid biosynthesis; L-homocysteine biosynthesis; L-homocysteine from S-adenosyl-L-homocysteine: step 1/1. In terms of biological role, may play a key role in the regulation of the intracellular concentration of adenosylhomocysteine. The polypeptide is Adenosylhomocysteinase (Gloeobacter violaceus (strain ATCC 29082 / PCC 7421)).